Here is a 766-residue protein sequence, read N- to C-terminus: Subtilisin-like protease SBT3.13 (766 aa).

The first 21 residues, 1-21, serve as a signal peptide directing secretion; the sequence is MNNSLQSSKLVLLLAIALVLF. Positions 22–120 are cleaved as a propeptide — activation peptide; sequence LNTELDFLTA…VIPNRIRKLK (99 aa). Positions 41-119 constitute an Inhibitor I9 domain; sequence VYIVYLGERE…HVIPNRIRKL (79 aa). The 485-residue stretch at 134 to 618 folds into the Peptidase S8 domain; it reads PTSFSSLSSV…GGLVNPEKAA (485 aa). Catalysis depends on Asp-162, which acts as the Charge relay system. 2 N-linked (GlcNAc...) asparagine glycosylation sites follow: Asn-195 and Asn-223. The active-site Charge relay system is His-239. 2 N-linked (GlcNAc...) asparagine glycosylation sites follow: Asn-254 and Asn-389. Residue Ser-549 is the Charge relay system of the active site. Asn-641 is a glycosylation site (N-linked (GlcNAc...) asparagine).

It belongs to the peptidase S8 family.

It localises to the secreted. This is Subtilisin-like protease SBT3.13 from Arabidopsis thaliana (Mouse-ear cress).